The primary structure comprises 107 residues: Proteinase inhibitor I-A (107 aa).

The signal sequence occupies residues 1–22; the sequence is MVKFAHVVAFLLLASLIQPLTA. Residues 23 to 36 constitute a propeptide that is removed on maturation; the sequence is RDLEINVLQLDVSQ.

Belongs to the protease inhibitor I13 (potato type I serine protease inhibitor) family.

The protein localises to the secreted. In Nicotiana tabacum (Common tobacco), this protein is Proteinase inhibitor I-A (TIMPB).